The chain runs to 1405 residues: Sterol 3-beta-glucosyltransferase (1405 aa).

Basic and acidic residues-rich tracts occupy residues 1–16 (MRPF…DRKL) and 95–105 (TGQRPRKESSV). Disordered stretches follow at residues 1–27 (MRPF…SASR), 83–186 (ARFD…SATP), and 203–230 (DLKA…ASVS). Residues 106–115 (RKGTSVSVNT) are compositionally biased toward polar residues. The segment covering 116–126 (SSLDPSQRSSS) has biased composition (low complexity). The span at 206–218 (ASSTERSQSSLNE) shows a compositional bias: polar residues. The 40-residue stretch at 246 to 285 (EKVLVEYACSLLQSMLLQGYMYVTEGHICFYAYLPKKSTV) folds into the GRAM 1 domain. The 100-residue stretch at 285 to 384 (VAIKSGYLHK…WVKALQKVIF (100 aa)) folds into the PH domain. 2 disordered regions span residues 461-526 (SQHL…DSSD) and 566-642 (TIYG…SGAP). Positions 483 to 493 (RWSLTSGTSRA) are enriched in polar residues. Basic and acidic residues predominate over residues 570 to 589 (LDRRPSGRERRGRRNSDETA). Residues 590-603 (RSPSTRVNVGTGQQ) are compositionally biased toward polar residues. Residues 606-624 (ELDRRTDGNTSGREARDTT) are compositionally biased toward basic and acidic residues. Positions 626–642 (ESDQYTQDPTKSFSGAP) are enriched in polar residues. The GRAM 2 domain maps to 724–790 (DRFRAHFALP…RDIENVEKEK (67 aa)). Residues Ser911, Arg912, Asp914, Ala1214, His1216, His1229, Gly1233, Thr1234, Asp1253, and Gln1254 each coordinate UDP-alpha-D-glucose. Residues 1330 to 1367 (SIASSTPFSPTPSAKTAAEQDADDDVEDSEEWTFVGDD) form a disordered region. Residues 1332–1348 (ASSTPFSPTPSAKTAAE) show a composition bias toward low complexity. Residues 1349-1367 (QDADDDVEDSEEWTFVGDD) are compositionally biased toward acidic residues.

The protein belongs to the glycosyltransferase 28 family.

It localises to the cytoplasm. The protein localises to the preautophagosomal structure membrane. The enzyme catalyses a sterol + UDP-alpha-D-glucose = a sterol 3-beta-D-glucoside + UDP + H(+). It carries out the reaction ergosterol + UDP-alpha-D-glucose = ergosteryl 3-beta-D-glucoside + UDP + H(+). Sterol glycosyltransferase responsible for the glycosylation of ergosterol to form ergosterol-glucoside. The chain is Sterol 3-beta-glucosyltransferase from Aspergillus fumigatus (strain ATCC MYA-4609 / CBS 101355 / FGSC A1100 / Af293) (Neosartorya fumigata).